We begin with the raw amino-acid sequence, 613 residues long: Laccase 1 (613 aa).

The signal sequence occupies residues 1-20 (MSRFARLLLIVALFFTGAWA). Plastocyanin-like domains follow at residues 29–142 (ITWK…IRPK) and 171–359 (YLVV…MRIP). A glycan (N-linked (GlcNAc...) asparagine) is linked at Asn74. Residues His78, His80, His122, and His124 each coordinate Cu cation. N-linked (GlcNAc...) asparagine glycosylation is found at Asn256, Asn279, Asn444, Asn468, and Asn484. The Plastocyanin-like 3 domain occupies 468-598 (NATRDTENDG…GGMGIAILDG (131 aa)). Cu cation contacts are provided by His506, His509, and His511. Asn526 carries N-linked (GlcNAc...) asparagine glycosylation. Cu cation-binding residues include His580, Cys581, His582, and His586.

Belongs to the multicopper oxidase family. The cofactor is Cu cation.

The protein localises to the cell surface. The protein operates within pigment biosynthesis. In terms of biological role, laccase; part of the Pks1 gene cluster that mediates the biosynthesis of an anthraquinone derivative pigment that contributes to conidial pigmentation that provides protection from UV radiation, heat and cold stress. The polyketide synthase Pks1 produces 1-acetyl-2,4,6,8-tetrahydroxy-9,10-anthraquinone though condensation of acetyl-CoA with malonyl-CoA. The dehydratase EthD and the laccase Mlac1 further convert the anthraquinone derivative into the final conidial pigment. The protein is Laccase 1 of Metarhizium guizhouense (strain ARSEF 977).